The following is a 498-amino-acid chain: GPI mannosyltransferase 4 (498 aa).

A helical membrane pass occupies residues 11-31 (FYLLTIVFRFVFTLSDSYIHP). Residue Asn-47 is glycosylated (N-linked (GlcNAc...) asparagine). Residues 63–83 (SLAPLYFIYGPLLYFIKFFKL) traverse the membrane as a helical segment. An N-linked (GlcNAc...) asparagine glycan is attached at Asn-84. A run of 9 helical transmembrane segments spans residues 96–116 (LQIS…MLPS), 140–160 (LFSN…IDDL), 189–209 (LGIF…WFVM), 222–242 (LVMG…ILFG), 247–267 (VVAE…NLLY), 282–302 (YYTH…IFFV), 310–330 (TPFL…HQEL), 332–348 (FLIP…DFTL), and 350–370 (WVQP…SILM). N-linked (GlcNAc...) asparagine glycans are attached at residues Asn-408 and Asn-473.

The protein belongs to the glycosyltransferase 22 family. PIGZ subfamily.

It localises to the endoplasmic reticulum membrane. The protein operates within glycolipid biosynthesis; glycosylphosphatidylinositol-anchor biosynthesis. In terms of biological role, alpha-1,2-mannosyltransferase involved in glycosylphosphatidylinositol-anchor biosynthesis. Transfers a fourth mannose to trimannosyl-GPIs during GPI precursor assembly. The presence of a fourth mannose in GPI is essential in fungi. This chain is GPI mannosyltransferase 4 (SMP3), found in Candida albicans (strain SC5314 / ATCC MYA-2876) (Yeast).